A 630-amino-acid chain; its full sequence is Protein phosphatase 2C-like domain-containing protein 1 (630 aa).

In terms of domain architecture, PPM-type phosphatase spans 170–621; it reads GVGICEDRNS…DNITVMVIFL (452 aa). Over residues 557 to 569 the composition is skewed to basic and acidic residues; the sequence is TTHRKPCSEKVTD. The disordered stretch occupies residues 557–578; that stretch reads TTHRKPCSEKVTDRPTSVNDVA.

Belongs to the PP2C family.

This is Protein phosphatase 2C-like domain-containing protein 1 (PP2D1) from Homo sapiens (Human).